A 103-amino-acid chain; its full sequence is Large ribosomal subunit protein bL21 (103 aa).

The protein belongs to the bacterial ribosomal protein bL21 family. As to quaternary structure, part of the 50S ribosomal subunit. Contacts protein L20.

This protein binds to 23S rRNA in the presence of protein L20. This is Large ribosomal subunit protein bL21 from Aeromonas hydrophila subsp. hydrophila (strain ATCC 7966 / DSM 30187 / BCRC 13018 / CCUG 14551 / JCM 1027 / KCTC 2358 / NCIMB 9240 / NCTC 8049).